The primary structure comprises 64 residues: Translation machinery-associated protein 7 homolog (64 aa).

The disordered stretch occupies residues 1 to 64; it reads MSGREGGKKK…QGGIKKSGKK (64 aa). Residues 21-50 are a coiled coil; sequence EMDEDTAAFKAKQKEQQKALEAAKQKATKG. Basic and acidic residues predominate over residues 32–44; sequence KQKEQQKALEAAK.

Belongs to the TMA7 family.

The sequence is that of Translation machinery-associated protein 7 homolog from Anopheles gambiae (African malaria mosquito).